A 226-amino-acid polypeptide reads, in one-letter code: ATP synthase subunit a (226 aa).

The next 6 membrane-spanning stretches (helical) occupy residues 18–38, 76–96, 105–125, 134–154, 179–199, and 201–221; these read FITG…SLGA, YFPL…IGII, SWSF…FEGI, FAHF…IEII, LIML…VLFF, and GILQ…GAVL.

This sequence belongs to the ATPase A chain family. F-type ATPases have 2 components, CF(1) - the catalytic core - and CF(0) - the membrane proton channel. CF(1) has five subunits: alpha(3), beta(3), gamma(1), delta(1), epsilon(1). CF(0) has three main subunits: a(1), b(2) and c(9-12). The alpha and beta chains form an alternating ring which encloses part of the gamma chain. CF(1) is attached to CF(0) by a central stalk formed by the gamma and epsilon chains, while a peripheral stalk is formed by the delta and b chains.

The protein localises to the cell inner membrane. Key component of the proton channel; it plays a direct role in the translocation of protons across the membrane. The sequence is that of ATP synthase subunit a from Helicobacter acinonychis (strain Sheeba).